The primary structure comprises 142 residues: Multiprotein-bridging factor 1a (142 aa).

Over residues 51–64 (GTNKAASSGTSLNT) the composition is skewed to polar residues. The segment at 51–77 (GTNKAASSGTSLNTKMLDDDTENLTHE) is disordered. One can recognise an HTH cro/C1-type domain in the interval 87–141 (IMQARTDKKLTQSQLAQIINEKPQVIQEYESGKAIPNQQILSKLERALGAKLRGK). A DNA-binding region (H-T-H motif) is located at residues 98–117 (QSQLAQIINEKPQVIQEYES).

The protein belongs to the MBF1 family. In terms of tissue distribution, expressed in leaves, roots, stems, flowers, siliques and shoots. Detected only in anthers and some seeds in siliques.

It is found in the nucleus. The protein resides in the nucleolus. Its function is as follows. Transcriptional coactivator that stimulates transcriptional activity by bridging regulatory proteins and TBP, thereby recruiting TBP to promoters occupied by DNA-binding regulators. The protein is Multiprotein-bridging factor 1a (MBF1A) of Arabidopsis thaliana (Mouse-ear cress).